Here is a 369-residue protein sequence, read N- to C-terminus: Glutamine synthetase (369 aa).

The region spanning 23–102 is the GS beta-grasp domain; sequence VIAEYIWVDS…VLAECWNNDG (80 aa). Residues 109–369 form the GS catalytic domain; that stretch reads HRHEAAKLFE…MSKEFERESS (261 aa).

Belongs to the glutamine synthetase family. In terms of assembly, homooctamer.

It is found in the cytoplasm. The catalysed reaction is L-glutamate + NH4(+) + ATP = L-glutamine + ADP + phosphate + H(+). The polypeptide is Glutamine synthetase (GLN1) (Eremothecium gossypii (strain ATCC 10895 / CBS 109.51 / FGSC 9923 / NRRL Y-1056) (Yeast)).